A 183-amino-acid polypeptide reads, in one-letter code: UPF0397 protein EAT1b_2102 (183 aa).

Transmembrane regions (helical) follow at residues Ile9–Pro29, Ala42–Ile62, Ser74–Ala94, Ala117–Ala137, and Gly147–Val167.

Belongs to the UPF0397 family.

Its subcellular location is the cell membrane. The polypeptide is UPF0397 protein EAT1b_2102 (Exiguobacterium sp. (strain ATCC BAA-1283 / AT1b)).